The primary structure comprises 175 residues: Adenine phosphoribosyltransferase (175 aa).

Belongs to the purine/pyrimidine phosphoribosyltransferase family. As to quaternary structure, homodimer.

Its subcellular location is the cytoplasm. The catalysed reaction is AMP + diphosphate = 5-phospho-alpha-D-ribose 1-diphosphate + adenine. It participates in purine metabolism; AMP biosynthesis via salvage pathway; AMP from adenine: step 1/1. Its function is as follows. Catalyzes a salvage reaction resulting in the formation of AMP, that is energically less costly than de novo synthesis. The chain is Adenine phosphoribosyltransferase from Lactobacillus delbrueckii subsp. bulgaricus (strain ATCC 11842 / DSM 20081 / BCRC 10696 / JCM 1002 / NBRC 13953 / NCIMB 11778 / NCTC 12712 / WDCM 00102 / Lb 14).